The chain runs to 155 residues: Ribosomal RNA large subunit methyltransferase H (155 aa).

S-adenosyl-L-methionine-binding positions include Leu-72, Gly-103, and Leu-122–Leu-127.

The protein belongs to the RNA methyltransferase RlmH family. As to quaternary structure, homodimer.

Its subcellular location is the cytoplasm. The enzyme catalyses pseudouridine(1915) in 23S rRNA + S-adenosyl-L-methionine = N(3)-methylpseudouridine(1915) in 23S rRNA + S-adenosyl-L-homocysteine + H(+). Specifically methylates the pseudouridine at position 1915 (m3Psi1915) in 23S rRNA. The chain is Ribosomal RNA large subunit methyltransferase H from Enterobacter sp. (strain 638).